The chain runs to 382 residues: GDSL esterase/lipase At4g01130 (382 aa).

Positions 1–28 are cleaved as a signal peptide; it reads MASDINRRRSFSLLVLIIVMLYGHKGDS. Catalysis depends on S41, which acts as the Nucleophile. N118, N263, N275, and N330 each carry an N-linked (GlcNAc...) asparagine glycan. Catalysis depends on residues D348 and H351.

It belongs to the 'GDSL' lipolytic enzyme family.

Its subcellular location is the secreted. This Arabidopsis thaliana (Mouse-ear cress) protein is GDSL esterase/lipase At4g01130.